A 171-amino-acid polypeptide reads, in one-letter code: 3-hydroxydecanoyl-[acyl-carrier-protein] dehydratase (171 aa).

His-70 is a catalytic residue.

The protein belongs to the thioester dehydratase family. FabA subfamily. In terms of assembly, homodimer.

It is found in the cytoplasm. The catalysed reaction is a (3R)-hydroxyacyl-[ACP] = a (2E)-enoyl-[ACP] + H2O. It catalyses the reaction (3R)-hydroxydecanoyl-[ACP] = (2E)-decenoyl-[ACP] + H2O. It carries out the reaction (2E)-decenoyl-[ACP] = (3Z)-decenoyl-[ACP]. The protein operates within lipid metabolism; fatty acid biosynthesis. In terms of biological role, necessary for the introduction of cis unsaturation into fatty acids. Catalyzes the dehydration of (3R)-3-hydroxydecanoyl-ACP to E-(2)-decenoyl-ACP and then its isomerization to Z-(3)-decenoyl-ACP. Can catalyze the dehydratase reaction for beta-hydroxyacyl-ACPs with saturated chain lengths up to 16:0, being most active on intermediate chain length. This chain is 3-hydroxydecanoyl-[acyl-carrier-protein] dehydratase, found in Shewanella denitrificans (strain OS217 / ATCC BAA-1090 / DSM 15013).